Here is a 389-residue protein sequence, read N- to C-terminus: UDP-D-apiose/UDP-D-xylose synthase 1 (389 aa).

The NAD(+) site is built by Phe28, Ile29, Asp49, Asn76, Ile77, and Leu96. Residues Tyr105, Thr139, Glu141, Arg182, and Tyr185 each coordinate UDP-alpha-D-glucuronate. Residues Tyr185 and Lys189 each coordinate NAD(+). Tyr185 functions as the Proton acceptor in the catalytic mechanism. Asn214 contacts UDP-alpha-D-glucuronate. Trp215 and Arg235 together coordinate NAD(+). Lys251, Val253, Arg260, Tyr331, Tyr335, Asp337, and Arg341 together coordinate UDP-alpha-D-glucuronate.

The protein belongs to the NAD(P)-dependent epimerase/dehydratase family. As to quaternary structure, homodimer and heterodimer with AXS2. Requires NAD(+) as cofactor. Widely expressed with stronger expression in leaves and stems, and lower levels in flowers, siliques, pistils, pollen and roots.

The protein localises to the cytoplasm. The enzyme catalyses UDP-alpha-D-glucuronate + H(+) = UDP-alpha-D-xylose + CO2. It carries out the reaction UDP-alpha-D-glucuronate + H(+) = UDP-alpha-D-apiose + CO2. Inhibited by UDP-D-galacturonate. Its function is as follows. Together with AXS2, catalyzes the conversion of UDP-D-glucuronate into a mixture of UDP-D-apiose (UDP-Api) as the main product and UDP-D-xylose to a lesser extent, via a cycle of oxidation and reduction. D-Apiose (3-C-hydroxymethyl-d-erythrose) is the only plant cell wall monosaccharide with a branched carbon skeleton and is found in rhamnogalacturonan II (RG-II), apiogalacturonan, and several apioglycosides. This chain is UDP-D-apiose/UDP-D-xylose synthase 1, found in Arabidopsis thaliana (Mouse-ear cress).